We begin with the raw amino-acid sequence, 395 residues long: Nickel and cobalt resistance protein CnrB (395 aa).

The chain crosses the membrane as a helical span at residues 13-33 (MIAGVAAVAAAVGFGAAHLPV). The tract at residues 35 to 55 (EKSPASTQAPEAQKPQSAPVK) is disordered. Over residues 37 to 50 (SPASTQAPEAQKPQ) the composition is skewed to polar residues. Residues 140–193 (AAERKVAQAKADLARKTYEREASLFQQGVTPRQEMEAAKAALDVAQAEALRAAT) adopt a coiled-coil conformation.

It belongs to the membrane fusion protein (MFP) (TC 8.A.1) family.

The protein resides in the cell inner membrane. The products of the genes cnrA, cnrB, and cnrC are likely to form a membrane-bound protein complex catalyzing an energy-dependent efflux of Ni(2+) and Co(2+). The mechanism of action of the CnrCBA complex may be that of a proton/cation antiporter. This Cupriavidus metallidurans (strain ATCC 43123 / DSM 2839 / NBRC 102507 / CH34) (Ralstonia metallidurans) protein is Nickel and cobalt resistance protein CnrB (cnrB).